Consider the following 317-residue polypeptide: Melanocyte-stimulating hormone receptor (317 aa).

Residues 1-37 (MPALGSQRRLLGSLNCTPPATLPFTLAPNRTGPQCLE) lie on the Extracellular side of the membrane. N-linked (GlcNAc...) asparagine glycosylation occurs at asparagine 29. A helical membrane pass occupies residues 38–63 (VSIPDGLFLSLGLVSLVENVLVVAAI). Residues 64-72 (AKNRNLHSP) lie on the Cytoplasmic side of the membrane. A helical membrane pass occupies residues 73 to 93 (MYYFICCLAVSDLLVSVSNVL). Over 94–118 (ETAVMLLLEAGVLATQAAVVQQLDN) the chain is Extracellular. Residues 119–140 (VIDVLICGSMVSSLCFLGAIAV) traverse the membrane as a helical segment. The Cytoplasmic segment spans residues 141–163 (DRYISIFYALRYHSVVTLPRAWR). A helical transmembrane segment spans residues 164 to 183 (IIAAIWVASILTSLLFITYY). Residues 184 to 191 (NHKVILLC) lie on the Extracellular side of the membrane. The helical transmembrane segment at 192-211 (LVGLFIAMLALMAVLYVHML) threads the bilayer. Over 212–240 (ARACQHARGIARLQKRQRPIHQGFGLKGA) the chain is Cytoplasmic. A helical transmembrane segment spans residues 241 to 266 (ATLTILLGVFFLCWGPFFLHLSLIVL). Residues 267–279 (CPQHPTCGCIFKN) lie on the Extracellular side of the membrane. The chain crosses the membrane as a helical span at residues 280 to 300 (FNLFLALIICNAIVDPLIYAF). At 301–317 (RSQELRKTLQEVLQCSW) the chain is on the cytoplasmic side. Cysteine 315 carries the S-palmitoyl cysteine lipid modification.

This sequence belongs to the G-protein coupled receptor 1 family. Interacts with MGRN1, but does not undergo MGRN1-mediated ubiquitination; this interaction competes with GNAS-binding and thus inhibits agonist-induced cAMP production. Interacts with OPN3; the interaction results in a decrease in MC1R-mediated cAMP signaling and ultimately a decrease in melanin production in melanocytes. Highly expressed in the testis.

The protein localises to the cell membrane. Receptor for MSH (alpha, beta) and ACTH. Does not seem to be active with gamma-MSH. The activity of this receptor is mediated by G proteins which activate adenylate cyclase. Mediates melanogenesis, the production of eumelanin (black/brown) and phaeomelanin (red/yellow), via regulation of cAMP signaling in melanocytes. This is Melanocyte-stimulating hormone receptor (MC1R) from Bos taurus (Bovine).